Consider the following 475-residue polypeptide: Tetratricopeptide repeat protein 29 (475 aa).

TPR repeat units lie at residues 92–131 (DALR…EDAE), 136–173 (FEDV…AQLI), 182–215 (AEAH…TQGR), 234–267 (LRTY…AKEG), 274–307 (GEAS…STEL), 314–347 (GRAY…ARNN), and 354–387 (VRAS…TVEL). The disordered stretch occupies residues 436 to 475 (DIEPDPVTEEFRGSTVETVSQNSEHLEELSRFPGDQKNET). Residues 459–475 (EHLEELSRFPGDQKNET) are compositionally biased toward basic and acidic residues.

The protein resides in the cytoplasm. It localises to the cytoskeleton. The protein localises to the flagellum axoneme. Its function is as follows. Axonemal protein which is implicated in axonemal and/or peri-axonemal structure assembly and regulates flagellum assembly and beating and therefore sperm motility. The chain is Tetratricopeptide repeat protein 29 (TTC29) from Macaca fascicularis (Crab-eating macaque).